The sequence spans 351 residues: SLAM family member 6 (351 aa).

The first 30 residues, 1-30, serve as a signal peptide directing secretion; the sequence is MAVSRAPAPDSACQRMVWLFPLVFCLGSGS. Over 31 to 239 the chain is Extracellular; that stretch reads EVSQSSSDPQ…KGVLTNPPWN (209 aa). One can recognise an Ig-like V-type domain in the interval 36–130; it reads SSDPQLMNGV…YTAQITTKDS (95 aa). 9 N-linked (GlcNAc...) asparagine glycosylation sites follow: Asn-82, Asn-101, Asn-112, Asn-152, Asn-159, Asn-172, Asn-186, Asn-193, and Asn-218. The Ig-like C2-type domain occupies 147–210; that stretch reads NLETTNYTLL…RNSGDQTYVC (64 aa). Disulfide bonds link Cys-162–Cys-229 and Cys-168–Cys-210. The chain crosses the membrane as a helical span at residues 240–262; the sequence is AVWFMTTISIISAVILIFVCWSI. Residues 263–351 are Cytoplasmic-facing; the sequence is HVWKRRGSLP…KVNTLINYNS (89 aa). The tract at residues 272–295 is disordered; the sequence is PLTSQHPESSQSTDGPGSPGNTVY. 2 consecutive short sequence motifs (ITSM) follow at residues 293–298 and 317–322; these read TVYAQV and TIYSIV. At Tyr-319 the chain carries Phosphotyrosine.

As to quaternary structure, homodimer. Interacts with PTN6 and, upon phosphorylation, with PTN11 and SH2D1A/SAP. In terms of processing, phosphorylated. In terms of tissue distribution, expressed on hematopoietic cells. Isoform 3 is expressed in thymocytes and B lymphocytes of C57Bl/6 strain.

Its subcellular location is the cell membrane. In terms of biological role, self-ligand receptor of the signaling lymphocytic activation molecule (SLAM) family. SLAM receptors triggered by homo- or heterotypic cell-cell interactions are modulating the activation and differentiation of a wide variety of immune cells and thus are involved in the regulation and interconnection of both innate and adaptive immune response. Activities are controlled by presence or absence of small cytoplasmic adapter proteins, SH2D1A/SAP and/or SH2D1B/EAT-2. Triggers cytolytic activity only in natural killer cells (NK) expressing high surface densities of natural cytotoxicity receptors. Positive signaling in NK cells implicates phosphorylation of VAV1. NK cell activation seems to depend on SH2D1B and not on SH2D1A. In conjunction with SLAMF1 controls the transition between positive selection and the subsequent expansion and differentiation of the thymocytic natural killer T (NKT) cell lineage. Promotes T cell differentiation into a helper T-cell Th17 phenotype leading to increased IL-17 secretion; the costimulatory activity requires SH2D1A. Promotes recruitment of RORC to the IL-17 promoter. In conjunction with SLAMF1 and CD84/SLAMF5 may be a negative regulator of the humoral immune response. In the absence of SH2D1A/SAP can transmit negative signals to CD4(+) T-cells and NKT cells. Negatively regulates germinal center formation by inhibiting T-cell:B-cell adhesion; the function probably implicates increased association with PTPN6/SHP-1 via ITSMs in absence of SH2D1A/SAP. However, reported to mediated T-cell adhesion, to participate in stable T-cell:B-cell interactions and to be involved in maintaining B-cell tolerance in germinal centers and in preventing autoimmunity. Involved in regulation of autoimmunity. Isoform 3 may be suppressor of pathogenic T-cell proliferation. The sequence is that of SLAM family member 6 (Slamf6) from Mus musculus (Mouse).